We begin with the raw amino-acid sequence, 117 residues long: Large ribosomal subunit protein uL22c (117 aa).

It belongs to the universal ribosomal protein uL22 family. In terms of assembly, part of the 50S ribosomal subunit.

The protein resides in the plastid. It localises to the chloroplast. Its function is as follows. This protein binds specifically to 23S rRNA. The globular domain of the protein is located near the polypeptide exit tunnel on the outside of the subunit, while an extended beta-hairpin is found that lines the wall of the exit tunnel in the center of the 70S ribosome. The polypeptide is Large ribosomal subunit protein uL22c (rpl22) (Pyropia yezoensis (Susabi-nori)).